The primary structure comprises 360 residues: Phospho-N-acetylmuramoyl-pentapeptide-transferase (360 aa).

Transmembrane regions (helical) follow at residues 27–47, 71–91, 93–113, 128–148, 168–188, 199–219, 239–259, 262–282, 288–308, and 337–357; these read GAMI…INSL, TPTM…LLWA, LASV…AIGF, FSGK…AFTI, LVIN…VGAG, GLAI…AYLS, LAVV…FNAP, AIFM…TVAV, IVLA…IIQV, and QVVI…LSTL.

Belongs to the glycosyltransferase 4 family. MraY subfamily. Requires Mg(2+) as cofactor.

The protein localises to the cell inner membrane. It carries out the reaction UDP-N-acetyl-alpha-D-muramoyl-L-alanyl-gamma-D-glutamyl-meso-2,6-diaminopimeloyl-D-alanyl-D-alanine + di-trans,octa-cis-undecaprenyl phosphate = di-trans,octa-cis-undecaprenyl diphospho-N-acetyl-alpha-D-muramoyl-L-alanyl-D-glutamyl-meso-2,6-diaminopimeloyl-D-alanyl-D-alanine + UMP. It participates in cell wall biogenesis; peptidoglycan biosynthesis. Catalyzes the initial step of the lipid cycle reactions in the biosynthesis of the cell wall peptidoglycan: transfers peptidoglycan precursor phospho-MurNAc-pentapeptide from UDP-MurNAc-pentapeptide onto the lipid carrier undecaprenyl phosphate, yielding undecaprenyl-pyrophosphoryl-MurNAc-pentapeptide, known as lipid I. The polypeptide is Phospho-N-acetylmuramoyl-pentapeptide-transferase (Brucella ovis (strain ATCC 25840 / 63/290 / NCTC 10512)).